A 1145-amino-acid chain; its full sequence is DNA mismatch repair protein msh-3 (1145 aa).

Disordered regions lie at residues 1–183 (MAGP…GAKT) and 857–879 (SSSA…LAQL). The segment covering 13 to 33 (ASISSFFTPRNTSPLVNLSQN) has biased composition (polar residues). Residues 121-131 (AERKKKEELHR) are compositionally biased toward basic and acidic residues. The segment covering 158 to 169 (GEGEEGEDDEEE) has biased composition (acidic residues). The mispair-binding domain stretch occupies residues 183-307 (TGKLTPMELQ…RKLTNVYTKG (125 aa)). 882 to 889 (GPNMGGKS) contacts ATP. The interval 1030-1056 (KSRTSMDDDAMEVDGDGDGQEGAGADK) is disordered. Over residues 1036-1048 (DDDAMEVDGDGDG) the composition is skewed to acidic residues.

The protein belongs to the DNA mismatch repair MutS family. MSH3 subfamily. As to quaternary structure, heterodimer consisting of msh-2-msh-3 (MutS beta). Forms a ternary complex with MutL alpha (mlh-1-pms-1).

It is found in the nucleus. Its function is as follows. Component of the post-replicative DNA mismatch repair system (MMR). Heterodimerizes with msh-2 to form MutS beta, which binds to DNA mismatches thereby initiating DNA repair. Msh-3 provides substrate-binding and substrate specificity to the complex. When bound, the MutS beta heterodimer bends the DNA helix and shields approximately 20 base pairs. Acts mainly to repair insertion-deletion loops (IDLs) from 2 to 13 nucleotides in size, but can also repair base-base and single insertion-deletion mismatches that occur during replication. After mismatch binding, forms a ternary complex with the MutL alpha heterodimer, which is thought to be responsible for directing the downstream MMR events, including strand discrimination, excision, and resynthesis. ATP binding and hydrolysis play a pivotal role in mismatch repair functions. This chain is DNA mismatch repair protein msh-3 (msh-3), found in Neurospora crassa (strain ATCC 24698 / 74-OR23-1A / CBS 708.71 / DSM 1257 / FGSC 987).